Consider the following 613-residue polypeptide: Dihydroxy-acid dehydratase (613 aa).

Aspartate 81 is a binding site for Mg(2+). Cysteine 122 is a binding site for [2Fe-2S] cluster. Mg(2+)-binding residues include aspartate 123 and lysine 124. Lysine 124 is modified (N6-carboxylysine). Cysteine 195 contacts [2Fe-2S] cluster. Glutamate 491 is a Mg(2+) binding site. Serine 517 acts as the Proton acceptor in catalysis.

The protein belongs to the IlvD/Edd family. As to quaternary structure, homodimer. [2Fe-2S] cluster serves as cofactor. The cofactor is Mg(2+).

It catalyses the reaction (2R)-2,3-dihydroxy-3-methylbutanoate = 3-methyl-2-oxobutanoate + H2O. The catalysed reaction is (2R,3R)-2,3-dihydroxy-3-methylpentanoate = (S)-3-methyl-2-oxopentanoate + H2O. It functions in the pathway amino-acid biosynthesis; L-isoleucine biosynthesis; L-isoleucine from 2-oxobutanoate: step 3/4. It participates in amino-acid biosynthesis; L-valine biosynthesis; L-valine from pyruvate: step 3/4. Functionally, functions in the biosynthesis of branched-chain amino acids. Catalyzes the dehydration of (2R,3R)-2,3-dihydroxy-3-methylpentanoate (2,3-dihydroxy-3-methylvalerate) into 2-oxo-3-methylpentanoate (2-oxo-3-methylvalerate) and of (2R)-2,3-dihydroxy-3-methylbutanoate (2,3-dihydroxyisovalerate) into 2-oxo-3-methylbutanoate (2-oxoisovalerate), the penultimate precursor to L-isoleucine and L-valine, respectively. The sequence is that of Dihydroxy-acid dehydratase from Nitrobacter hamburgensis (strain DSM 10229 / NCIMB 13809 / X14).